The primary structure comprises 124 residues: Small ribosomal subunit protein uS12 (124 aa).

At Asp-89 the chain carries 3-methylthioaspartic acid.

It belongs to the universal ribosomal protein uS12 family. Part of the 30S ribosomal subunit. Contacts proteins S8 and S17. May interact with IF1 in the 30S initiation complex.

Its function is as follows. With S4 and S5 plays an important role in translational accuracy. In terms of biological role, interacts with and stabilizes bases of the 16S rRNA that are involved in tRNA selection in the A site and with the mRNA backbone. Located at the interface of the 30S and 50S subunits, it traverses the body of the 30S subunit contacting proteins on the other side and probably holding the rRNA structure together. The combined cluster of proteins S8, S12 and S17 appears to hold together the shoulder and platform of the 30S subunit. The protein is Small ribosomal subunit protein uS12 of Glaesserella parasuis serovar 5 (strain SH0165) (Haemophilus parasuis).